Reading from the N-terminus, the 87-residue chain is Large ribosomal subunit protein bL27 (87 aa).

The tract at residues 1–24 (MATKKAGGSSRNGRDSAGRRLGVK) is disordered.

The protein belongs to the bacterial ribosomal protein bL27 family.

This is Large ribosomal subunit protein bL27 from Rickettsia massiliae (strain Mtu5).